The primary structure comprises 206 residues: Small ribosomal subunit protein uS4 (206 aa).

Positions 96 to 156 (GRLDNVVYRM…EKSKKQARIK (61 aa)) constitute an S4 RNA-binding domain.

The protein belongs to the universal ribosomal protein uS4 family. In terms of assembly, part of the 30S ribosomal subunit. Contacts protein S5. The interaction surface between S4 and S5 is involved in control of translational fidelity.

Its function is as follows. One of the primary rRNA binding proteins, it binds directly to 16S rRNA where it nucleates assembly of the body of the 30S subunit. With S5 and S12 plays an important role in translational accuracy. This Histophilus somni (strain 129Pt) (Haemophilus somnus) protein is Small ribosomal subunit protein uS4.